Here is a 495-residue protein sequence, read N- to C-terminus: Zinc finger and SCAN domain-containing protein 5B (495 aa).

The tract at residues 1–40 is disordered; it reads MAANWTLSWGQGGPCNSPGSDTPRSVASPETQLGNHDRNP. Residues 17 to 34 show a composition bias toward polar residues; the sequence is SPGSDTPRSVASPETQLG. One can recognise an SCAN box domain in the interval 44–126; sequence HMNFRMFSCP…DLLRNNRRPK (83 aa). Disordered regions lie at residues 150–183 and 227–347; these read APAS…RREQ and ENRE…PDGQ. A compositionally biased stretch (polar residues) spans 161–173; sequence VSSQWASSVNQMH. The segment covering 250–262 has biased composition (basic and acidic residues); it reads RAKEGKEPQKRAS. Residues 292–310 are compositionally biased toward polar residues; that stretch reads NLSSPKRSKPDASSISQEE. 5 C2H2-type zinc fingers span residues 355–377, 383–405, 411–433, 439–461, and 467–489; these read FACD…RRSH, FQCD…QRVH, YMCD…KRIH, FKCK…QRTH, and YKCP…LKTH.

Its subcellular location is the nucleus. Functionally, may be involved in transcriptional regulation. The polypeptide is Zinc finger and SCAN domain-containing protein 5B (ZSCAN5B) (Homo sapiens (Human)).